The primary structure comprises 447 residues: Mannose/glucose-specific lectin (447 aa).

Jacalin-type lectin domains are found at residues 5–148 (MISV…FVKP), 153–294 (TISF…YVKP), and 300–443 (SISI…FVKP).

It belongs to the jacalin lectin family. In terms of tissue distribution, expressed in seeds (at protein level).

Hemagglutinating activity is slightly inhibited by alpha-methyl-D-mannopyranoside. Its function is as follows. D-mannose/D-glucose-binding lectin that also binds derivatives N-acetyl-D-glucosamine and alpha-methyl-D-mannopyranoside. Does not bind D-galactose, L-Rhamnose, D-fructose, lactose or glycoproteins fetiun and mucin. Shows agglutinating activity towards human and rabbit erythrocytes. Also displays antimicrobial activity against L.infantum. The polypeptide is Mannose/glucose-specific lectin (Parkia pendula (Inga pendula)).